We begin with the raw amino-acid sequence, 135 residues long: MGGQSKVFTLAEVSNHNNAKDCWLIISGKVYNVTKFLEDHPGGGEVLLSATGKDATDDFEDIGHSSSARAMLDEYYVGDIDSSTIPTKVKYTPPKQPHYNQDKTTEFIVKLLQFLVPLIILGVAFGVHFYTKQSA.

One can recognise a Cytochrome b5 heme-binding domain in the interval 5 to 81; that stretch reads SKVFTLAEVS…LDEYYVGDID (77 aa). Positions 40 and 64 each coordinate heme. The helical transmembrane segment at 107 to 127 threads the bilayer; the sequence is FIVKLLQFLVPLIILGVAFGV.

Belongs to the cytochrome b5 family. Specifically expressed in developing seeds.

The protein localises to the endoplasmic reticulum membrane. Its subcellular location is the microsome membrane. Its function is as follows. Cytochrome b5 is a membrane bound hemoprotein which function as an electron carrier for several membrane bound oxygenases. May play a key role in the modification by desaturation of fatty acids in the endoplasmic reticulum, which in the developing seed is utilized for membrane synthesis and in the developmentally regulated production of large amounts of storage lipids. The protein is Cytochrome b5, seed isoform of Nicotiana tabacum (Common tobacco).